The chain runs to 278 residues: Putative phosphoenolpyruvate synthase regulatory protein (278 aa).

158-165 (GVSRSGKT) is a binding site for ADP.

The protein belongs to the pyruvate, phosphate/water dikinase regulatory protein family. PSRP subfamily.

The catalysed reaction is [pyruvate, water dikinase] + ADP = [pyruvate, water dikinase]-phosphate + AMP + H(+). It carries out the reaction [pyruvate, water dikinase]-phosphate + phosphate + H(+) = [pyruvate, water dikinase] + diphosphate. Bifunctional serine/threonine kinase and phosphorylase involved in the regulation of the phosphoenolpyruvate synthase (PEPS) by catalyzing its phosphorylation/dephosphorylation. The polypeptide is Putative phosphoenolpyruvate synthase regulatory protein (Acinetobacter baylyi (strain ATCC 33305 / BD413 / ADP1)).